The primary structure comprises 272 residues: Protein FAM210A (272 aa).

The 113-residue stretch at 117 to 229 (DKSISLYQRF…GYMSTPPPVK (113 aa)) folds into the DUF1279 domain. A helical transmembrane segment spans residues 136 to 156 (VLIPVHLITSGVWFGTFYYAA). Residues 229–271 (KEYLQDRMEETKELITEKMEETKDRLTEKLQETKEKVSFKKKV) are a coiled coil. The interval 246 to 272 (KMEETKDRLTEKLQETKEKVSFKKKVE) is disordered.

This sequence belongs to the FAM210 family. As to quaternary structure, interacts with ATAD3A.

The protein resides in the membrane. It localises to the mitochondrion. Its subcellular location is the cytoplasm. In terms of biological role, may play a role in the structure and strength of both muscle and bone. The sequence is that of Protein FAM210A (FAM210A) from Pongo abelii (Sumatran orangutan).